A 221-amino-acid chain; its full sequence is GTP-binding nuclear protein Ran/TC4 (221 aa).

The Small GTPase Ran-type domain occupies 10 to 174 (DYPSFKLVIV…LYLARKLAGD (165 aa)). 21-28 (DGGTGKTT) is a binding site for GTP. Positions 40–48 (KKYEPTIGV) are switch-I. GTP-binding positions include G71, 125–128 (NKVD), and 153–155 (SAK). The tract at residues 71-87 (GQEKFGGLRDGYYIHGQ) is switch-II.

It belongs to the small GTPase superfamily. Ran family. In terms of assembly, found in a nuclear export complex with RanGTP, exportin and pre-miRNA.

The protein resides in the nucleus. GTP-binding protein involved in nucleocytoplasmic transport. Required for the import of protein into the nucleus and also for RNA export. Involved in chromatin condensation and control of cell cycle. This chain is GTP-binding nuclear protein Ran/TC4, found in Vicia faba (Broad bean).